Consider the following 363-residue polypeptide: Protein EXORDIUM-like 5 (363 aa).

Residues 1–25 form the signal peptide; sequence MSSPATTITFFFFFTLSSFFYITSS. N-linked (GlcNAc...) asparagine glycosylation is present at Asn144.

The protein belongs to the EXORDIUM family.

The protein localises to the secreted. Its subcellular location is the extracellular space. It is found in the apoplast. May play a role in a brassinosteroid-dependent regulation of growth and development. The sequence is that of Protein EXORDIUM-like 5 (EXL5) from Arabidopsis thaliana (Mouse-ear cress).